The chain runs to 125 residues: uncharacterized protein (125 aa).

The protein to transposase of insertion sequence IS6501.

This is an uncharacterized protein from Sinorhizobium fredii (strain NBRC 101917 / NGR234).